We begin with the raw amino-acid sequence, 321 residues long: UDP-N-acetylenolpyruvoylglucosamine reductase (321 aa).

An FAD-binding PCMH-type domain is found at 39–205; that stretch reads RTGGLAELFY…TAALLEGEPG (167 aa). Arg185 is a catalytic residue. Ser234 serves as the catalytic Proton donor. Glu304 is an active-site residue.

The protein belongs to the MurB family. FAD serves as cofactor.

Its subcellular location is the cytoplasm. The enzyme catalyses UDP-N-acetyl-alpha-D-muramate + NADP(+) = UDP-N-acetyl-3-O-(1-carboxyvinyl)-alpha-D-glucosamine + NADPH + H(+). It functions in the pathway cell wall biogenesis; peptidoglycan biosynthesis. In terms of biological role, cell wall formation. This chain is UDP-N-acetylenolpyruvoylglucosamine reductase, found in Bartonella quintana (strain Toulouse) (Rochalimaea quintana).